The chain runs to 1316 residues: Serine/threonine-protein kinase 36 (1316 aa).

One can recognise a Protein kinase domain in the interval 4–254; the sequence is YHVLEMIGEG…WPDLLHHPFI (251 aa). ATP-binding positions include 10–18 and lysine 33; that span reads IGEGSFGRV. Catalysis depends on aspartate 125, which acts as the Proton acceptor. The disordered stretch occupies residues 389 to 418; the sequence is QGFPEPRPEAMGRQSTDVVDPENEEPDSDD. Positions 407–418 are enriched in acidic residues; it reads VDPENEEPDSDD.

The protein belongs to the protein kinase superfamily. Ser/Thr protein kinase family. As to quaternary structure, interacts with SPAG16 and KIF27. Mg(2+) serves as cofactor. As to expression, weakly expressed in the heart and thymus, present at moderate to high levels in the lungs, pancreas, and kidneys and at higher levels in the brain and cerebellum. Very highly expressed in the testis.

The protein resides in the cytoplasm. It localises to the nucleus. Its subcellular location is the cytoskeleton. It is found in the cilium axoneme. The enzyme catalyses L-seryl-[protein] + ATP = O-phospho-L-seryl-[protein] + ADP + H(+). It carries out the reaction L-threonyl-[protein] + ATP = O-phospho-L-threonyl-[protein] + ADP + H(+). Its function is as follows. Serine/threonine protein kinase which plays an important role in the sonic hedgehog (Shh) pathway by regulating the activity of GLI transcription factors. Controls the activity of the transcriptional regulators GLI1, GLI2 and GLI3 by opposing the effect of SUFU and promoting their nuclear localization. GLI2 requires an additional function of STK36 to become transcriptionally active, but the enzyme does not need to possess an active kinase catalytic site for this to occur. Required for postnatal development, possibly by regulating the homeostasis of cerebral spinal fluid or ciliary function. Essential for construction of the central pair apparatus of motile cilia. In Mus musculus (Mouse), this protein is Serine/threonine-protein kinase 36.